A 145-amino-acid chain; its full sequence is Deoxyuridine 5'-triphosphate nucleotidohydrolase (145 aa).

Substrate contacts are provided by residues 63–65, N76, and 80–82; these read RSG and TID.

This sequence belongs to the dUTPase family. It depends on Mg(2+) as a cofactor.

It catalyses the reaction dUTP + H2O = dUMP + diphosphate + H(+). It participates in pyrimidine metabolism; dUMP biosynthesis; dUMP from dCTP (dUTP route): step 2/2. Functionally, this enzyme is involved in nucleotide metabolism: it produces dUMP, the immediate precursor of thymidine nucleotides and it decreases the intracellular concentration of dUTP so that uracil cannot be incorporated into DNA. This Chlamydia pneumoniae (Chlamydophila pneumoniae) protein is Deoxyuridine 5'-triphosphate nucleotidohydrolase.